Here is a 503-residue protein sequence, read N- to C-terminus: Mitochondrial antiviral-signaling protein (503 aa).

Residues 1-478 (MTFAEDKTYK…HCASSMPWAK (478 aa)) lie on the Cytoplasmic side of the membrane. Residues lysine 7 and lysine 10 each participate in a glycyl lysine isopeptide (Lys-Gly) (interchain with G-Cter in ubiquitin) cross-link. The CARD domain maps to 10-77 (KYIRDNHSKF…WVEVFIRALQ (68 aa)). Residues 10–77 (KYIRDNHSKF…WVEVFIRALQ (68 aa)) form a required for interaction with NLRX1 region. Cysteine 79 is lipidated: S-palmitoyl cysteine. The tract at residues 119–202 (GPSAFAPGHN…HQEQEPELGG (84 aa)) is disordered. An interaction with TRAF2 region spans residues 143–147 (PVQDT). The segment covering 145 to 166 (QDTQPPESPVENSEQLLQTNSG) has biased composition (polar residues). Phosphoserine is present on residues serine 152, serine 157, serine 172, serine 186, and serine 220. The segment at 153–158 (PVENSE) is interaction with TRAF6 1. Residues 178 to 189 (PSPNQQALSPQP) are compositionally biased toward polar residues. Arginine 234 bears the Asymmetric dimethylarginine mark. Phosphoserine occurs at positions 251 and 256. Residue lysine 302 forms a Glycyl lysine isopeptide (Lys-Gly) (interchain with G-Cter in ubiquitin) linkage. An interaction with DHX33 region spans residues 337-503 (PSRVPASVAK…MLYRSRRLAQ (167 aa)). Residues 346–398 (KAPANTIPPERNSKQAKETPEGPATKVTTGGNQTGPNSSIRSLHSGPEMSKPG) are disordered. Residues 356–365 (RNSKQAKETP) are compositionally biased toward basic and acidic residues. The span at 371-387 (KVTTGGNQTGPNSSIRS) shows a compositional bias: polar residues. Residue serine 384 is modified to Phosphoserine. A pLxIS motif motif is present at residues 415 to 418 (LAIS). A Phosphoserine; by TBK1 modification is found at serine 418. The interaction with TRAF6 2 stretch occupies residues 431–436 (PEENEY). The disordered stretch occupies residues 446–466 (SPSADLLGSPEPLATQQPQEE). Residues 479-496 (WLGATSALLAVFLAVMLY) traverse the membrane as a helical segment. Residues 497–503 (RSRRLAQ) lie on the Mitochondrial intermembrane side of the membrane.

Self-associates and polymerizes (via CARD domains) to form 400 nM long three-stranded helical filaments on mitochondria, filament nucleation requires interaction with RIGI whose CARD domains act as a template for filament assembly. Interacts with RIGI, IFIH1/MDA5, TRAF2, TRAF6 and C1QBP. May interact with FADD, RIPK1, IKBKE, CHUK and IKBKB. Interacts (when phosphorylated) with IRF3; following activation and phosphorylation on the pLxIS motif by TBK1, recruits IRF3. Interacts with NLRX1. Interaction with NLRX1 requires the CARD domain. Interacts with PSMA7. Interacts with TRAFD1. Interacts (via C-terminus) with PCBP2 in a complex containing MAVS/IPS1, PCBP2 and ITCH. Interacts with CYLD. Interacts with SRC. Interacts with DHX58/LGP2 and IKBKE. Interacts with STING1. Interacts with IFIT3 (via N-terminus). Interacts with TBK1 only in the presence of IFIT3. Interacts with TTLL12; the interaction prevents MAVS binding to TBK1 and IKBKE. Interacts with MUL1. Interacts with ANKRD17. Interacts with NDFIP1. Interacts with SMURF1; the interaction is mediated by NDFIP1 and leads to MAVS ubiquitination and degradation. Interacts (via C-terminus) with GPATCH3; the interaction is markedly increased upon viral infection. Directly interacts (via CARD domain) with ATG5 and ATG12, either as ATG5 and ATG12 monomers or as ATG12-ATG5 conjugates. Interacts with DHX33 (via the helicase C-terminal domain). Interacts with DDX3X (via C-terminus); this interaction may occur rapidly, but transiently after viral infection. The interaction with DDX3X potentiates MAVS-mediated IFNB induction. Conversely inhibition of this interaction prevents MAVS-mediated IFNB induction. Transiently interacts with TRAF3 early during viral infection. Interacts with CLPB. Interacts with TRAF3IP3. Interacts with TOMM70; the interaction is enhanced by virus infection. Interacts with ZNFX1. Interacts with DHX15. Interacts with N4BP3; this interaction promotes the polyubiquitination of MAVS. Interacts with TAX1BP1; this interaction induces MAVS polyubiquitination. Interacts with NLRP3; promoting NLRP3 recruitment to mitochondria and activation of the NLRP3 inflammasome. Interacts with ECSIT; this interaction bridges RIGI to the MAVS complex at the mitochondrion. Interacts with UBL7; this interaction promotes MAVS 'Lys-27'-linked ubiquitination leading to type I interferon production. Interacts (via transmembrane domain) with SMIM30/MAVI1 (via transmembrane domain); the interaction disrupts MAVS interaction with RIGI and inhibits MAVS aggregation, resulting in the repression of type I interferon signaling and innate immune responses. In terms of processing, following activation, phosphorylated by TBK1 at Ser-418 in the pLxIS motif. The phosphorylated pLxIS motif constitutes an IRF3-binding motif, leading to recruitment of the transcription factor IRF3 to induce type-I interferons and other cytokines. Post-translationally, ubiquitinated. Undergoes 'Lys-48'-linked polyubiquitination catalyzed by ITCH; ITCH-dependent polyubiquitination is mediated by the interaction with PCBP2 and leads to MAVS/IPS1 proteasomal degradation. Ubiquitinated by RNF125, leading to its degradation by the proteasome. Undergoes 'Lys-48'-linked ubiquitination catalyzed by SMURF1. Undergoes 'Lys-48'-linked ubiquitination catalyzed by MARCHF5 at Lys-7, leading to proteasomal degradation. Ubiquitinated via 'Lys-63'-linked ubiquitination at Lys-10 by TRIM31, promoting MAVS polymerization and formation of three-stranded helical filaments on mitochondria. Undergoes 'Lys-63'-linked ubiquitination leading to enhanced interaction between MAVS and TRAF2. Undergoes 'Lys-27'-linked ubiquitination by UBE2N and TRIM21 leading to enhanced interaction between MAVS and TBK1. Deubiquitinated by USP10 leading to attenuation of RIGI-mediated MAVS aggregation and production of type I interferon. Undergoes 'Lys-48'-linked polyubiquitination catalyzed by RNF115 leading to its degradation. Proteolytically cleaved by apoptotic caspases during apoptosis, leading to its inactivation. Cleavage by CASP3 during virus-induced apoptosis inactivates it, preventing cytokine overproduction. In terms of processing, palmitoylated by ZHDDC4. Palmitoylation promotes MAVS stabilization and activation by inhibiting 'Lys-48'- but facilitating 'Lys-63'-linked ubiquitination.

It is found in the mitochondrion outer membrane. Its subcellular location is the mitochondrion. It localises to the peroxisome. In terms of biological role, adapter required for innate immune defense against viruses. Acts downstream of DHX33, RIGI and IFIH1/MDA5, which detect intracellular dsRNA produced during viral replication, to coordinate pathways leading to the activation of NF-kappa-B, IRF3 and IRF7, and to the subsequent induction of antiviral cytokines such as IFN-beta and RANTES (CCL5). Peroxisomal and mitochondrial MAVS act sequentially to create an antiviral cellular state. Upon viral infection, peroxisomal MAVS induces the rapid interferon-independent expression of defense factors that provide short-term protection, whereas mitochondrial MAVS activates an interferon-dependent signaling pathway with delayed kinetics, which amplifies and stabilizes the antiviral response. May activate the same pathways following detection of extracellular dsRNA by TLR3. May protect cells from apoptosis. Involved in NLRP3 inflammasome activation by mediating NLRP3 recruitment to mitochondria. The chain is Mitochondrial antiviral-signaling protein from Mus musculus (Mouse).